Here is a 194-residue protein sequence, read N- to C-terminus: Imidazole glycerol phosphate synthase subunit HisH (194 aa).

One can recognise a Glutamine amidotransferase type-1 domain in the interval 3–194 (RIAIVDLGIG…LILLRNFRRL (192 aa)). The Nucleophile role is filled by C74. Residues H176 and E178 contribute to the active site.

As to quaternary structure, heterodimer of HisH and HisF.

It is found in the cytoplasm. It catalyses the reaction 5-[(5-phospho-1-deoxy-D-ribulos-1-ylimino)methylamino]-1-(5-phospho-beta-D-ribosyl)imidazole-4-carboxamide + L-glutamine = D-erythro-1-(imidazol-4-yl)glycerol 3-phosphate + 5-amino-1-(5-phospho-beta-D-ribosyl)imidazole-4-carboxamide + L-glutamate + H(+). The catalysed reaction is L-glutamine + H2O = L-glutamate + NH4(+). The protein operates within amino-acid biosynthesis; L-histidine biosynthesis; L-histidine from 5-phospho-alpha-D-ribose 1-diphosphate: step 5/9. IGPS catalyzes the conversion of PRFAR and glutamine to IGP, AICAR and glutamate. The HisH subunit catalyzes the hydrolysis of glutamine to glutamate and ammonia as part of the synthesis of IGP and AICAR. The resulting ammonia molecule is channeled to the active site of HisF. This is Imidazole glycerol phosphate synthase subunit HisH from Pyrococcus furiosus (strain ATCC 43587 / DSM 3638 / JCM 8422 / Vc1).